The sequence spans 156 residues: Small ribosomal subunit protein uS7 (156 aa).

The protein belongs to the universal ribosomal protein uS7 family. In terms of assembly, part of the 30S ribosomal subunit. Contacts proteins S9 and S11.

Functionally, one of the primary rRNA binding proteins, it binds directly to 16S rRNA where it nucleates assembly of the head domain of the 30S subunit. Is located at the subunit interface close to the decoding center, probably blocks exit of the E-site tRNA. This Shewanella frigidimarina (strain NCIMB 400) protein is Small ribosomal subunit protein uS7.